The primary structure comprises 731 residues: Two pore channel protein 2 (731 aa).

The Cytoplasmic segment spans residues 1 to 68; that stretch reads MAAEEQPLLG…RWYYSNVCQR (68 aa). Residues 69–89 form a helical membrane-spanning segment; the sequence is VLGFIIFLILILAFVEVPSSF. Residues 90-111 lie on the Extracellular side of the membrane; the sequence is TKTADVRYRSQPWQPPCGLTET. Residues 112 to 132 form a helical membrane-spanning segment; sequence IEAFCLLAFLVDLSVKGYLVG. At 133 to 139 the chain is on the cytoplasmic side; the sequence is QAQLQQN. A helical membrane pass occupies residues 140 to 160; sequence LWLLAYFMVLVVSVVDWIVSL. The Extracellular segment spans residues 161-167; sequence SLACEEP. The helical transmembrane segment at 168 to 188 threads the bilayer; that stretch reads LRMRRLLRPFFLLQNSSMMKK. The segment at 187-191 is interaction with phosphatidylinositol 3,5-bisphosphate; the sequence is KKTLK. The Cytoplasmic portion of the chain corresponds to 189–203; sequence TLKCIRWSLPEMASV. The chain crosses the membrane as a helical span at residues 204–224; sequence GLLLAIHLCLFTIIGMLLFTI. Topologically, residues 225–238 are extracellular; the sequence is GEKDEAQDQERLAY. The helical; Pore-forming intramembrane region spans 239-263; it reads FRNLPEALTSLLVLLTTSNNPDVMI. The Extracellular segment spans residues 264–270; that stretch reads PAYTQNR. A helical transmembrane segment spans residues 271-291; sequence AFALFFIVFTLIGSLFLMNLL. Residues 292–417 lie on the Cytoplasmic side of the membrane; it reads TAIIYNQFRG…TAQFIFSHHY (126 aa). Residues 418 to 438 traverse the membrane as a helical segment; the sequence is FDYLGNLVALGNLLSICVFLV. Over 439 to 449 the chain is Extracellular; the sequence is LDSDLLPGERD. Residues 450–470 form a helical membrane-spanning segment; it reads DFVLGILDYIFILYYLLELLF. The Cytoplasmic segment spans residues 471–486; the sequence is KVFALGLPGYLSYHSN. Residues 487–507 traverse the membrane as a helical segment; it reads VFDGLLTIILLVSEICTLAVY. The Extracellular portion of the chain corresponds to 508–524; sequence RLPHSGWKPEQYGPLSL. Residues 525 to 542 traverse the membrane as a helical segment; the sequence is WDMTRLMNTLIVFRFLRI. The Cytoplasmic portion of the chain corresponds to 543–564; that stretch reads IPNIKPMAEVANTILGLIPNLR. Residues 565-585 form a helical membrane-spanning segment; sequence AFGGILVVAYYVFAMIGINLF. Residues 586–618 lie on the Extracellular side of the membrane; the sequence is RGVIVPPGNSSLVPDNNSAVCGSFEQLGYWPNN. N-linked (GlcNAc...) asparagine glycosylation is found at N594 and N601. An intramembrane region (helical; Pore-forming) is located at residues 619–641; that stretch reads FDDFAAALITLWNVMVVNNWQVI. Residues 642-656 lie on the Extracellular side of the membrane; sequence LEAYKRYAGPWSMVY. A helical membrane pass occupies residues 657–677; it reads FVLWWLVSSVIWINLFLALLL. Topologically, residues 678 to 731 are cytoplasmic; the sequence is ENFLHRWDPQGHKQLLVGTKQMSVELMFRDILEEPKEEELMEKLHKHPHLHLCR.

The protein belongs to the calcium channel alpha-1 subunit (TC 1.A.1.11) family. Two pore calcium channel subfamily. Homodimer. Interacts with LRRK2. Interacts with HAX1. Interacts with MTOR; the interaction is required for TPCN2 ATP sensitivity. Found in a complex with LSM12, TPCN1 and TPCN2. Interacts with LSM12. Post-translationally, N-glycosylated. In terms of tissue distribution, widely expressed. Highly expressed in macrophages. Expressed in pigmented cells.

It is found in the late endosome membrane. Its subcellular location is the lysosome membrane. It localises to the melanosome membrane. The catalysed reaction is Ca(2+)(in) = Ca(2+)(out). The enzyme catalyses Na(+)(in) = Na(+)(out). With respect to regulation, regulated by Mg(2+) ions, cytosolic Mg(2+) selectively inhibits outward current while lysosomal Mg(2+) modestly inhibits both the outward and inward currents. In the absence of Mg(2+), NAADP readily activates TPCN2, with properties similar to PI(3,5)P2. Na(+) current is inhibited by ATP in a MTORC-dependent manner. ATP sensitivity is independent of PI(3,5)P2. Both current elicited by PI(3,5)P2 as well as NAADP are inhibited by tetrandrine. In terms of biological role, intracellular channel initially characterized as a non-selective Ca(2+)-permeable channel activated by NAADP (nicotinic acid adenine dinucleotide phosphate), it is also a highly-selective Na(+) channel activated directly by PI(3,5)P2 (phosphatidylinositol 3,5-bisphosphate). Localizes to the lysosomal and late endosome membranes where it regulates organellar membrane excitability, membrane trafficking, and pH homeostasis. Is associated with a plethora of physiological processes, including mTOR-dependent nutrient sensing, skin pigmentation and autophagy. Ion selectivity is not fixed but rather agonist-dependent and under defined ionic conditions, can be readily activated by both NAADP and PI(3,5)P2. As calcium channel, it increases the pH in the lysosomal lumen, as sodium channel, it promotes lysosomal exocytosis. Plays a crucial role in endolysosomal trafficking in the endolysosomal degradation pathway and is potentially involved in the homeostatic control of many macromolecules and cell metabolites. Also expressed in melanosomes of pigmented cells where mediates a Ca(2+) channel and/or PI(3,5)P2-activated melanosomal Na(+) channel to acidify pH and inhibit tyrosinase activity required for melanogenesis and pigmentation. Unlike the voltage-dependent TPCN1, TPCN2 is voltage independent and can be activated solely by PI(3,5)P2 binding. In contrast, PI(4,5)P2, PI(3,4)P2, PI(3)P and PI(5)P have no obvious effect on channel activation. Its function is as follows. (Microbial infection) During Ebola virus (EBOV) infection, controls the movement of endosomes containing virus particles and is required by EBOV to escape from the endosomal network into the cell cytoplasm. The sequence is that of Two pore channel protein 2 from Mus musculus (Mouse).